The following is a 753-amino-acid chain: Glycerophosphodiester phosphodiesterase GDPDL6 (753 aa).

The first 17 residues, 1–17 (MLRFFILFSLFLHSSVA), serve as a signal peptide directing secretion. 2 GP-PDE domains span residues 41-339 (PAVV…SQSI) and 355-654 (ALVI…TRYL). N-linked (GlcNAc...) asparagine glycans are attached at residues Asn304, Asn516, Asn603, and Asn715. The segment at 707–729 (PPVAKLASNGTEGGPPQTPPRSG) is disordered. Residues 731–751 (VAIAANLSLSLLAMMALGLLY) traverse the membrane as a helical segment.

This sequence belongs to the glycerophosphoryl diester phosphodiesterase family. As to expression, expressed in flowers and siliques.

It is found in the membrane. It catalyses the reaction a sn-glycero-3-phosphodiester + H2O = an alcohol + sn-glycerol 3-phosphate + H(+). This is Glycerophosphodiester phosphodiesterase GDPDL6 from Arabidopsis thaliana (Mouse-ear cress).